The primary structure comprises 346 residues: Eukaryotic translation initiation factor 3 subunit I (346 aa).

WD repeat units lie at residues 8-49 (GHER…GTYH), 50-91 (GHQG…KTWD), 145-184 (CEDS…LLYN), 189-228 (ELNQ…VLKT), and 286-325 (GHFG…FDFM).

It belongs to the eIF-3 subunit I family. In terms of assembly, component of the eukaryotic translation initiation factor 3 (eIF-3) complex.

The protein localises to the cytoplasm. Its function is as follows. Component of the eukaryotic translation initiation factor 3 (eIF-3) complex, which is involved in protein synthesis of a specialized repertoire of mRNAs and, together with other initiation factors, stimulates binding of mRNA and methionyl-tRNAi to the 40S ribosome. The eIF-3 complex specifically targets and initiates translation of a subset of mRNAs involved in cell proliferation. In Neurospora crassa (strain ATCC 24698 / 74-OR23-1A / CBS 708.71 / DSM 1257 / FGSC 987), this protein is Eukaryotic translation initiation factor 3 subunit I (tif-34).